A 103-amino-acid polypeptide reads, in one-letter code: Large ribosomal subunit protein bL21 (103 aa).

Belongs to the bacterial ribosomal protein bL21 family. In terms of assembly, part of the 50S ribosomal subunit. Contacts protein L20.

Its function is as follows. This protein binds to 23S rRNA in the presence of protein L20. The polypeptide is Large ribosomal subunit protein bL21 (Saccharophagus degradans (strain 2-40 / ATCC 43961 / DSM 17024)).